A 732-amino-acid polypeptide reads, in one-letter code: Nephrocystin-1 (732 aa).

Residues 3–105 (ARRQRDPLQA…LQGLAVTISR (103 aa)) are a coiled coil. The residue at position 46 (Tyr-46) is a Phosphotyrosine; by FAK2. Disordered regions lie at residues 103-153 (ISRE…KWST) and 205-244 (TYLEPYSEEEEGQESSEEGSEEDVEAVDETADGAEVKQRT). 2 stretches are compositionally biased toward acidic residues: residues 115–145 (TEEEEESESEDSEDSGGEEEDAEEEEEEKEE) and 210–236 (YSEEEEGQESSEEGSEEDVEAVDETAD). Phosphoserine; by CK2 is present on residues Ser-121, Ser-123, and Ser-126. Residues 127 to 150 (EDSGGEEEDAEEEEEEKEENESHK) are a coiled coil. In terms of domain architecture, SH3 spans 152–212 (STGEEYIAVG…PRTYLEPYSE (61 aa)). Phosphotyrosine; by FAK2 is present on Tyr-349. The residue at position 721 (Tyr-721) is a Phosphotyrosine; by SRC.

Belongs to the nephrocystin-1 family. In terms of assembly, interacts with BCAR1, PTK2B/PYK2 and tensin. Interacts with INVS and NPHP3. Interacts with PACS1; the interaction is dependent on NPHP1 phosphorylation by CK2. Interacts with KIF7. Interacts with AHI1 and TNK2. Interacts with NPHP4 in a complex containing NPHP1, NPHP4 and RPGRIP1L. Interacts with IQCB1; the interaction likely requires additional interactors. Interacts with ANKS3. Interacts with SPATA7. Interacts with FLNA. Post-translationally, phosphorylation by CK2 is required for the interaction with PACS1 and the targeting to the base region of cilia. As to expression, widespread expression, with highest levels in pituitary gland, spinal cord, thyroid gland, testis, skeletal muscle, lymph node and trachea. Weakly expressed in heart, kidney and pancreas. Expressed in nasal epithelial cells (at protein level). Expressed in the renal collecting duct (at protein level).

The protein localises to the cell junction. The protein resides in the adherens junction. Its subcellular location is the cell projection. It localises to the cilium. It is found in the cytoplasm. The protein localises to the cytoskeleton. The protein resides in the cilium axoneme. Its subcellular location is the tight junction. Functionally, together with BCAR1 it may play a role in the control of epithelial cell polarity. Involved in the organization of apical junctions in kidney cells together with NPHP4 and RPGRIP1L/NPHP8. Does not seem to be strictly required for ciliogenesis. Seems to help to recruit PTK2B/PYK2 to cell matrix adhesions, thereby initiating phosphorylation of PTK2B/PYK2 and PTK2B/PYK2-dependent signaling. May play a role in the regulation of intraflagellar transport (IFT) during cilia assembly. Required for normal retina development. In connecting photoreceptor cilia influences the movement of some IFT proteins such as IFT88 and WDR19. Involved in spermatogenesis. In Homo sapiens (Human), this protein is Nephrocystin-1 (NPHP1).